The primary structure comprises 300 residues: Epimerase family protein SAR0825 (300 aa).

This sequence belongs to the NAD(P)-dependent epimerase/dehydratase family. SDR39U1 subfamily.

This chain is Epimerase family protein SAR0825, found in Staphylococcus aureus (strain MRSA252).